Consider the following 410-residue polypeptide: D-amino acid dehydrogenase (410 aa).

Gly-9–Gly-14 contacts FAD.

Belongs to the DadA oxidoreductase family. FAD serves as cofactor.

It localises to the cell inner membrane. The catalysed reaction is a D-alpha-amino acid + a quinone + H2O = a 2-oxocarboxylate + a quinol + NH4(+). Functionally, catalyzes the oxidative deamination of D-amino acids. Has broad substrate specificity; is mostly active on D-proline, and to a lesser extent, on several other D-amino acids such as D-alanine, D-phenylalanine and D-serine. Mediates electron transport from D-proline to coenzyme Q1 in vitro, and is involved in the electron transport chain from D-proline to the c-type cytochrome in vivo. This is D-amino acid dehydrogenase from Helicobacter pylori (strain ATCC 700392 / 26695) (Campylobacter pylori).